A 1368-amino-acid polypeptide reads, in one-letter code: DNA-directed RNA polymerase subunit beta (1368 aa).

The protein belongs to the RNA polymerase beta chain family. In terms of assembly, the RNAP catalytic core consists of 2 alpha, 1 beta, 1 beta' and 1 omega subunit. When a sigma factor is associated with the core the holoenzyme is formed, which can initiate transcription.

It catalyses the reaction RNA(n) + a ribonucleoside 5'-triphosphate = RNA(n+1) + diphosphate. In terms of biological role, DNA-dependent RNA polymerase catalyzes the transcription of DNA into RNA using the four ribonucleoside triphosphates as substrates. This Ralstonia pickettii (strain 12J) protein is DNA-directed RNA polymerase subunit beta.